Consider the following 413-residue polypeptide: Alpha-1-antitrypsin-like protein CM55-ST (413 aa).

The signal sequence occupies residues 1–24; the sequence is MPSSISWGLLLLAALSCLGPGSLA. Glutamine 25 is subject to Pyrrolidone carboxylic acid. N-linked (GlcNAc...) asparagine glycosylation is found at asparagine 65, asparagine 102, asparagine 165, and asparagine 266. Residues 368–387 form an RCL region; sequence GGTVLGNIRSTLRYEVIFDR.

The protein belongs to the serpin family. As to expression, expressed in liver.

This is Alpha-1-antitrypsin-like protein CM55-ST from Tamias sibiricus (Siberian chipmunk).